A 1362-amino-acid polypeptide reads, in one-letter code: DNA-directed RNA polymerase subunit beta (1362 aa).

This sequence belongs to the RNA polymerase beta chain family. As to quaternary structure, the RNAP catalytic core consists of 2 alpha, 1 beta, 1 beta' and 1 omega subunit. When a sigma factor is associated with the core the holoenzyme is formed, which can initiate transcription.

It catalyses the reaction RNA(n) + a ribonucleoside 5'-triphosphate = RNA(n+1) + diphosphate. Functionally, DNA-dependent RNA polymerase catalyzes the transcription of DNA into RNA using the four ribonucleoside triphosphates as substrates. The polypeptide is DNA-directed RNA polymerase subunit beta (Acinetobacter baumannii (strain AB307-0294)).